The following is a 360-amino-acid chain: MSLTRLNIEAFRNIQFAQLIPAPGINVIYGQNGSGKTSILEAIYFLGMGRSFRSHLSQRVINNDNDKLTLFATLNLARGDSKIGLRRFRSGETEVKIDGEKVKRLSTLAETLPIQVITPESFSLLFEGPKSRRQFIDWGAFHADPQFYGAWTNVRRVLKQRNQLLRNGAVYTHIQFWDQEFVRYAEQVTEIRNHYVDSLNGLLKGIIGEFLPSVDVKVSFTRGWDSKTDFAELLENQYSRDLATGHTVSGPHKADLRLRVGNLPAQDALSRGQLKLLVCALRIAQGKLLKQQIDKHSIYLVDDLPSELDAQHRQLLLKQLTDTGAQVFVTAIDPAAIVDSLHTPPNRMFHVEQGRVTVVE.

30-37 is a binding site for ATP; sequence GQNGSGKT.

This sequence belongs to the RecF family.

It is found in the cytoplasm. In terms of biological role, the RecF protein is involved in DNA metabolism; it is required for DNA replication and normal SOS inducibility. RecF binds preferentially to single-stranded, linear DNA. It also seems to bind ATP. The polypeptide is DNA replication and repair protein RecF (Shewanella sp. (strain W3-18-1)).